A 162-amino-acid chain; its full sequence is Dihydrofolate reductase type 3 (162 aa).

Positions 2–160 constitute a DHFR domain; the sequence is LISLIAALAH…YACEFVTLSR (159 aa).

It belongs to the dihydrofolate reductase family. As to quaternary structure, monomer.

It catalyses the reaction (6S)-5,6,7,8-tetrahydrofolate + NADP(+) = 7,8-dihydrofolate + NADPH + H(+). It participates in cofactor biosynthesis; tetrahydrofolate biosynthesis; 5,6,7,8-tetrahydrofolate from 7,8-dihydrofolate: step 1/1. Key enzyme in folate metabolism. Catalyzes an essential reaction for de novo glycine and purine synthesis, and for DNA precursor synthesis. In Salmonella typhimurium, this protein is Dihydrofolate reductase type 3 (dhfrIII).